A 371-amino-acid chain; its full sequence is Queuine tRNA-ribosyltransferase (371 aa).

D90 serves as the catalytic Proton acceptor. Residues 90–94, D144, Q188, and G215 each bind substrate; that span reads DSGGF. Residues 246–252 are RNA binding; that stretch reads GVGTPED. D265 acts as the Nucleophile in catalysis. Residues 270–274 form an RNA binding; important for wobble base 34 recognition region; sequence TRNAR. Zn(2+) contacts are provided by C303, C305, C308, and H334.

The protein belongs to the queuine tRNA-ribosyltransferase family. Homodimer. Within each dimer, one monomer is responsible for RNA recognition and catalysis, while the other monomer binds to the replacement base PreQ1. Zn(2+) serves as cofactor.

It catalyses the reaction 7-aminomethyl-7-carbaguanine + guanosine(34) in tRNA = 7-aminomethyl-7-carbaguanosine(34) in tRNA + guanine. It participates in tRNA modification; tRNA-queuosine biosynthesis. Functionally, catalyzes the base-exchange of a guanine (G) residue with the queuine precursor 7-aminomethyl-7-deazaguanine (PreQ1) at position 34 (anticodon wobble position) in tRNAs with GU(N) anticodons (tRNA-Asp, -Asn, -His and -Tyr). Catalysis occurs through a double-displacement mechanism. The nucleophile active site attacks the C1' of nucleotide 34 to detach the guanine base from the RNA, forming a covalent enzyme-RNA intermediate. The proton acceptor active site deprotonates the incoming PreQ1, allowing a nucleophilic attack on the C1' of the ribose to form the product. After dissociation, two additional enzymatic reactions on the tRNA convert PreQ1 to queuine (Q), resulting in the hypermodified nucleoside queuosine (7-(((4,5-cis-dihydroxy-2-cyclopenten-1-yl)amino)methyl)-7-deazaguanosine). This chain is Queuine tRNA-ribosyltransferase, found in Neisseria meningitidis serogroup A / serotype 4A (strain DSM 15465 / Z2491).